The following is a 239-amino-acid chain: Uridylate kinase (239 aa).

ATP is bound at residue 10–13 (KLSG). Residues 18-23 (GEQGYG) are involved in allosteric activation by GTP. Gly52 contributes to the UMP binding site. ATP is bound by residues Gly53 and Arg57. UMP-binding positions include Asp72 and 133–140 (TGNPYFST). ATP-binding residues include Asn161, Tyr167, and Glu170.

The protein belongs to the UMP kinase family. As to quaternary structure, homohexamer.

It is found in the cytoplasm. The catalysed reaction is UMP + ATP = UDP + ADP. Its pathway is pyrimidine metabolism; CTP biosynthesis via de novo pathway; UDP from UMP (UMPK route): step 1/1. Allosterically activated by GTP. Inhibited by UTP. Catalyzes the reversible phosphorylation of UMP to UDP. The protein is Uridylate kinase of Halalkalibacterium halodurans (strain ATCC BAA-125 / DSM 18197 / FERM 7344 / JCM 9153 / C-125) (Bacillus halodurans).